We begin with the raw amino-acid sequence, 283 residues long: Acetyl-coenzyme A carboxylase carboxyl transferase subunit beta (283 aa).

In terms of domain architecture, CoA carboxyltransferase N-terminal spans 29 to 283; it reads LWISCPKCQQ…VKIHSMKGAF (255 aa). Positions 33, 36, 51, and 54 each coordinate Zn(2+). Residues 33-54 form a C4-type zinc finger; the sequence is CPKCQQSIYHKDLGKYKTCPNC.

This sequence belongs to the AccD/PCCB family. As to quaternary structure, acetyl-CoA carboxylase is a heterohexamer composed of biotin carboxyl carrier protein (AccB), biotin carboxylase (AccC) and two subunits each of ACCase subunit alpha (AccA) and ACCase subunit beta (AccD). It depends on Zn(2+) as a cofactor.

The protein localises to the cytoplasm. It catalyses the reaction N(6)-carboxybiotinyl-L-lysyl-[protein] + acetyl-CoA = N(6)-biotinyl-L-lysyl-[protein] + malonyl-CoA. It functions in the pathway lipid metabolism; malonyl-CoA biosynthesis; malonyl-CoA from acetyl-CoA: step 1/1. In terms of biological role, component of the acetyl coenzyme A carboxylase (ACC) complex. Biotin carboxylase (BC) catalyzes the carboxylation of biotin on its carrier protein (BCCP) and then the CO(2) group is transferred by the transcarboxylase to acetyl-CoA to form malonyl-CoA. The protein is Acetyl-coenzyme A carboxylase carboxyl transferase subunit beta of Ligilactobacillus salivarius (strain UCC118) (Lactobacillus salivarius).